The chain runs to 103 residues: Mitochondrial import inner membrane translocase subunit Tim10 B (103 aa).

The short motif at 28–52 (CFQRCVPSLHHRALDAEEEACLHSC) is the Twin CX3C motif element. Cystine bridges form between Cys-28-Cys-52 and Cys-32-Cys-48.

It belongs to the small Tim family. Component of the TIM22 complex, which core is composed of TIMM22, associated with TIMM10 (TIMM10A and/or TIMM10B), TIMM9, AGK and TIMM29. In terms of tissue distribution, ubiquitous, with highest expression in heart, kidney, liver and skeletal muscle.

The protein resides in the mitochondrion inner membrane. In terms of biological role, component of the TIM22 complex, a complex that mediates the import and insertion of multi-pass transmembrane proteins into the mitochondrial inner membrane. The TIM22 complex forms a twin-pore translocase that uses the membrane potential as the external driving force. In the TIM22 complex, it may act as a docking point for the soluble 70 kDa complex that guides the target proteins in transit through the aqueous mitochondrial intermembrane space. This chain is Mitochondrial import inner membrane translocase subunit Tim10 B (TIMM10B), found in Homo sapiens (Human).